The sequence spans 323 residues: Transcriptional regulator protein Pur-beta-A (323 aa).

3 disordered regions span residues 1 to 34, 100 to 122, and 286 to 323; these read MADG…QELA, SPEQ…PRRA, and QERQ…VDDD. At Ala-2 the chain carries N-acetylalanine. Residues 9 to 19 are compositionally biased toward gly residues; it reads ERGGSSGGPGG. A compositionally biased stretch (basic and acidic residues) spans 24 to 34; the sequence is MSREQETQELA. Positions 27-257 are DNA-binding; sequence EQETQELATK…LRVSEVKPSY (231 aa). Residues 286 to 305 show a composition bias toward basic and acidic residues; sequence QERQRDKMYERRGPGDRERS. Residues 313 to 323 show a composition bias toward acidic residues; that stretch reads DDSETEDVDDD.

It belongs to the PUR DNA-binding protein family.

It is found in the nucleus. Functionally, transcriptional regulator which can act as an activator or a repressor. The sequence is that of Transcriptional regulator protein Pur-beta-A (purb-a) from Xenopus laevis (African clawed frog).